The primary structure comprises 285 residues: Urease accessory protein UreD (285 aa).

This sequence belongs to the UreD family. UreD, UreF and UreG form a complex that acts as a GTP-hydrolysis-dependent molecular chaperone, activating the urease apoprotein by helping to assemble the nickel containing metallocenter of UreC. The UreE protein probably delivers the nickel.

It is found in the cytoplasm. In terms of biological role, required for maturation of urease via the functional incorporation of the urease nickel metallocenter. This Picosynechococcus sp. (strain ATCC 27264 / PCC 7002 / PR-6) (Agmenellum quadruplicatum) protein is Urease accessory protein UreD.